The sequence spans 888 residues: CRISPR-associated endonuclease/helicase Cas3 (888 aa).

Residues 20–231 (KGNDIHLLIY…AGFCSLADWL (212 aa)) form the HD Cas3-type domain. The Mg(2+) site is built by Asp75 and His160. The region spanning 301–504 (DALPVAPGLT…LDTYGLHTDP (204 aa)) is the Helicase ATP-binding domain. ATP is bound at residue 314–321 (APTGSGKT). The DEAH box motif lies at 452–455 (DEVH). The Helicase C-terminal domain maps to 556 to 735 (MLERMIAAAN…AYRQWLDSIY (180 aa)).

In the N-terminal section; belongs to the CRISPR-associated nuclease Cas3-HD family. It in the central section; belongs to the CRISPR-associated helicase Cas3 family. As to quaternary structure, interacts with the CasA subunit of Cascade once Cascade has recognized target DNA. The cofactor is Mg(2+).

Its function is as follows. CRISPR (clustered regularly interspaced short palindromic repeat), is an adaptive immune system that provides protection against mobile genetic elements (viruses, transposable elements and conjugative plasmids). CRISPR clusters contain sequences complementary to antecedent mobile elements and target invading nucleic acids. CRISPR clusters are transcribed and processed into CRISPR RNA (crRNA). Cas3 plus Cascade participate in CRISPR interference, the third stage of CRISPR immunity. In terms of biological role, acts as an endonuclease, a 3'-5'exonuclease, and an ATP-dependent dsDNA helicase. Anneals and unwinds R-loops (in which crRNA binds the target DNA, displacing the noncomplementary strand). Unwinding requires ATP, annealing does not. Required along with the Cascade complex for resistance to bacteriophage lambda infection as well as the ability to cure CRISPR-encoding high-copy number plasmid. A Cas3-CasA fusion protein purified with the Cascade complex nicks target plasmid in the presence but not absence of Mg(2+), and degrades plasmid fully in the presence of Mg(2+) and ATP, suggesting the helicase activity is required for complete degradation. The chain is CRISPR-associated endonuclease/helicase Cas3 (ygcB) from Escherichia coli (strain K12).